A 116-amino-acid polypeptide reads, in one-letter code: NADH-ubiquinone oxidoreductase chain 3 (116 aa).

Transmembrane regions (helical) follow at residues 3–23 (LITT…TISF), 56–76 (FFLI…LLPL), and 87–107 (LTLI…IYEW).

This sequence belongs to the complex I subunit 3 family.

The protein localises to the mitochondrion membrane. The enzyme catalyses a ubiquinone + NADH + 5 H(+)(in) = a ubiquinol + NAD(+) + 4 H(+)(out). Functionally, core subunit of the mitochondrial membrane respiratory chain NADH dehydrogenase (Complex I) that is believed to belong to the minimal assembly required for catalysis. Complex I functions in the transfer of electrons from NADH to the respiratory chain. The immediate electron acceptor for the enzyme is believed to be ubiquinone. The chain is NADH-ubiquinone oxidoreductase chain 3 (MT-ND3) from Oncorhynchus gorbuscha (Pink salmon).